The primary structure comprises 99 residues: uncharacterized protein (99 aa).

Positions 1–17 are cleaved as a signal peptide; that stretch reads MMMNAFFPAMALMVLVG. A lipid anchor (N-palmitoyl cysteine) is attached at C18. A lipid anchor (S-diacylglycerol cysteine) is attached at C18.

It is found in the cell membrane. This is an uncharacterized protein from Shigella boydii serotype 4 (strain Sb227).